Reading from the N-terminus, the 554-residue chain is MFCIQCEQTIRTPAGNGCSYAQGMCGKLAATSDLQDLLIYMLQGVSVYATKARELGVINPEVDTFVPKAFFSTLTNVNFDDERIIAYAKQAAEYRESLKNAYEAACETAGKRAESLPPVAQFVLGTSKPEMLSQAPVALLNKDKNEIHEDILGLRLLCLYGLKGAAAYMEHARVLGKTDAEIAGRFHEIMAFLGEPSVDADKLFTTAMDIGQLNYRIMAMLDAGETEAFGHPEPTVVNTKPVKGKAILVSGHDMKDLELILEQTAGKGINVYTHGEMLPALAYPAFKKYAHLVGNYGSAWQNQQKEFANFPGAVVMTSNCIIDPNVGQYSDRIFTRSIVGWPGVTHVIGDDFSVVIDKALSLDGFQYDEIPHNITIGFARNALMAAAPTVVENVKNGSIKHFFLVGGCDGDKSERSYFTDLAKSAPKDSVILTLGCGKYKFNKLEFGDINGIPRLLDIGQCNDAYSAIQLAIALSQIFECDINELPLNLVLSWFEQKAIVVLLTLLSLGVKNIRTGPTPPAFLTANLAKILEEKFGLRNTTTVEADLKTMLNVA.

C3, C6, C18, and C25 together coordinate [2Fe-2S] cluster. Residues H252, E276, C320, C408, C436, C461, E495, and K497 each contribute to the hybrid [4Fe-2O-2S] cluster site. At C408 the chain carries Cysteine persulfide.

It belongs to the HCP family. [2Fe-2S] cluster serves as cofactor. Requires hybrid [4Fe-2O-2S] cluster as cofactor.

The protein localises to the cytoplasm. The catalysed reaction is A + NH4(+) + H2O = hydroxylamine + AH2 + H(+). In terms of biological role, catalyzes the reduction of hydroxylamine to form NH(3) and H(2)O. In Shewanella sp. (strain MR-7), this protein is Hydroxylamine reductase.